We begin with the raw amino-acid sequence, 363 residues long: Peptide-N(4)-(N-acetyl-beta-glucosaminyl)asparagine amidase (363 aa).

Residues Cys129, Cys132, Cys165, and Cys168 each coordinate Zn(2+). Catalysis depends on Cys191, which acts as the Nucleophile. Catalysis depends on residues His218 and Asp235. Substrate is bound at residue Glu238. The tract at residues 325–363 is disordered; sequence RGKTQETKSESVSAASKSSNRGRESGSADWKAQRGEDGK. The segment covering 334–343 has biased composition (low complexity); that stretch reads ESVSAASKSS. Over residues 345–363 the composition is skewed to basic and acidic residues; it reads RGRESGSADWKAQRGEDGK.

Belongs to the transglutaminase-like superfamily. PNGase family. Interacts with RAD23 subunit of 26S proteasome. It depends on Zn(2+) as a cofactor.

Its subcellular location is the cytoplasm. It localises to the nucleus. It catalyses the reaction Hydrolysis of an N(4)-(acetyl-beta-D-glucosaminyl)asparagine residue in which the glucosamine residue may be further glycosylated, to yield a (substituted) N-acetyl-beta-D-glucosaminylamine and a peptide containing an aspartate residue.. Its activity is regulated as follows. Inhibited by Z-VAD-fmk, a well-known caspase inhibitor. Also inhibited by Man9GlcNAc2-iodoacetoamide. Both molecules inhibit enzyme activity through covalent binding of the carbohydrate to the single Cys-191 residue. In terms of biological role, specifically deglycosylates the denatured form of N-linked glycoproteins in the cytoplasm and assists their proteasome-mediated degradation. Cleaves the beta-aspartyl-glucosamine (GlcNAc) of the glycan and the amide side chain of Asn, converting Asn to Asp. Prefers proteins containing high-mannose over those bearing complex type oligosaccharides. Can recognize misfolded proteins in the endoplasmic reticulum that are exported to the cytosol to be destroyed and deglycosylate them, while it has no activity toward native proteins. Deglycosylation is a prerequisite for subsequent proteasome-mediated degradation of some, but not all, misfolded glycoproteins. Involved in the formation of free oligosaccharide in cytosol. The chain is Peptide-N(4)-(N-acetyl-beta-glucosaminyl)asparagine amidase (PNG1) from Saccharomyces cerevisiae (strain ATCC 204508 / S288c) (Baker's yeast).